The following is a 162-amino-acid chain: CASP-like protein BLE3 (162 aa).

Residues methionine 1 to leucine 7 are Cytoplasmic-facing. The helical transmembrane segment at methionine 8–valine 28 threads the bilayer. Residues threonine 29–serine 50 are Extracellular-facing. Residues phenylalanine 51 to valine 71 traverse the membrane as a helical segment. Residues proline 72–aspartate 85 lie on the Cytoplasmic side of the membrane. Residues valine 86–alanine 106 traverse the membrane as a helical segment. At lysine 107–histidine 128 the chain is on the extracellular side. The helical transmembrane segment at valine 129–tyrosine 149 threads the bilayer. Over serine 150–histidine 162 the chain is Cytoplasmic.

This sequence belongs to the Casparian strip membrane proteins (CASP) family. In terms of assembly, homodimer and heterodimers.

The protein resides in the cell membrane. Its function is as follows. Involved in cell elongation in rice through dual regulation by brassinolide and auxin. The sequence is that of CASP-like protein BLE3 (BLE3) from Oryza sativa subsp. indica (Rice).